The primary structure comprises 559 residues: Cytoplasmic polyadenylation element-binding protein 1 (559 aa).

The disordered stretch occupies residues 222–243; sequence SRMDHSSSPLTPPPSASPSGSL. 2 RRM domains span residues 304 to 401 and 423 to 504; these read CKVF…DAQV and NTVF…PYLE. 8 residues coordinate Zn(2+): C508, C511, C520, C525, C530, C533, H538, and H546.

Belongs to the RRM CPEB family. Expressed in oocytes (at protein level). During oocyte maturation becomes detectable at stage Ib, and remains ubiquitously distributed within the oocyte cytoplasm until stage II. It then follows a gradual accumulation to the future animal pole during stage III, and remains localized to this pole at stage IV (at protein level). Expressed in oocytes, blastomeres and pre-mid-blastula transition embryos. Its expression during oogenesis is ubiquitous at stages I and II, but gradually accumulated at the periphery of the oocyte in the presumptive animal pole during stage III. Expression was maintained in that region at stage IV, and then became delocalized at stage V to cover a much broader area presumably encompassing the future blastodisc.

The protein localises to the cytoplasm. Its function is as follows. Sequence-specific RNA-binding protein that regulates mRNA cytoplasmic polyadenylation and translation initiation during oocyte maturation and early development. Binds to the cytoplasmic polyadenylation element (CPE), an uridine-rich sequence element (consensus sequence 5'-UUUUUAU-3') within the mRNA 3'-UTR. This is Cytoplasmic polyadenylation element-binding protein 1 (cpeb1) from Danio rerio (Zebrafish).